A 361-amino-acid polypeptide reads, in one-letter code: F-box protein pof7 (361 aa).

One can recognise an F-box domain in the interval 105-157; sequence NESVVPNILKLPDEVLLVILENCIRDLHDLRYLSSIALTCKHFAKALRADSLY.

As to quaternary structure, interacts with skp1.

Its subcellular location is the cytoplasm. This is F-box protein pof7 (pof7) from Schizosaccharomyces pombe (strain 972 / ATCC 24843) (Fission yeast).